The following is a 622-amino-acid chain: Signal recognition particle subunit SRP68 (622 aa).

The segment at Arg576 to Lys622 is disordered. Residues Lys585–Lys595 show a composition bias toward low complexity.

Belongs to the SRP68 family. As to quaternary structure, heterodimer with srpa-72. Srpa-68/srpa-72 heterodimer formation is stabilized by the presence of 7SL RNA. Component of a signal recognition particle (SRP) complex that consists of a 7SL RNA molecule of 300 nucleotides and six protein subunits: srpa-72, srpa-68, SRP54, F37F2.2/SRP19, F25G6.8/SRP14 and ZK512.4/SRP9. Within the SRP complex, interacts (via C-terminus) with srpa-72 (via N-terminus).

It is found in the cytoplasm. The protein resides in the nucleus. Its subcellular location is the nucleolus. It localises to the endoplasmic reticulum. Component of the signal recognition particle (SRP) complex, a ribonucleoprotein complex that mediates the cotranslational targeting of secretory and membrane proteins to the endoplasmic reticulum (ER). The SRP complex interacts with the signal sequence in nascent secretory and membrane proteins and directs them to the membrane of the ER. The SRP complex targets the ribosome-nascent chain complex to the SRP receptor (SR), which is anchored in the ER, where SR compaction and GTPase rearrangement drive cotranslational protein translocation into the ER. Binds the signal recognition particle RNA (7SL RNA), srpa-72 binds to this complex subsequently. The SRP complex possibly participates in the elongation arrest function. The sequence is that of Signal recognition particle subunit SRP68 from Caenorhabditis elegans.